Here is a 326-residue protein sequence, read N- to C-terminus: tRNA-modifying protein YgfZ (326 aa).

The folate site is built by W27 and W189.

This sequence belongs to the tRNA-modifying YgfZ family.

The protein localises to the cytoplasm. Its function is as follows. Folate-binding protein involved in regulating the level of ATP-DnaA and in the modification of some tRNAs. It is probably a key factor in regulatory networks that act via tRNA modification, such as initiation of chromosomal replication. This chain is tRNA-modifying protein YgfZ, found in Salmonella arizonae (strain ATCC BAA-731 / CDC346-86 / RSK2980).